The sequence spans 622 residues: MDSHSGEPALLPCGTCDMVFRSSALLATHTQRFCIGHPTQEMTFGAQASVATEPQRAAVVPQEHQGVPQEPQGLPDQQASRSALKRLTEEVQWLRLSLQEMRPWITEVPRVFAGPWTRSEARPQSPMSEAVGSPSERLRALFRTRARRVAEMEAQSRALQLRGEELSRRLQVVACTRGGMSRLFGLEQEIRELQAEAGRTRGALEVLGARIQELQAEPGNPLSSRREAELYSPVQKANPGTLAAEIRALREAYIRDGGRDPGVLGQIWQLQVEASALELQRSQTRRGRAGATSGELPVVEAENRRLEAEILALQMQRGRAPLGPQDLRLLGDASLQPKGRRDPPLLPPPVAPPLPPLPGFSEPQLPGTMTRNLGLDSHFLLPTSDMLGPAPYDPGAGLVIFYDFLRGLEASWIWVQLRTGLARDGRDTGRTTALPPALCLPPPPAPGPMGNCAILASRQPVPRLPPSSSVSLVCELQVWQGLAWARAPQPKAWVSLGLFDQDQRVLSGRWRLPLRALPLDPSLSLGQLNGIPQAGQAELFLRLVNARDAAVQTLAEINPASVHEYQYPPPVSSTSSLEASFLTPAVGFADPPPRTEEPLSGVKDRDEGLGPHHSSDLPPVSF.

Coiled-coil stretches lie at residues 81–102 (RSAL…QEMR), 146–207 (ARRV…LEVL), and 294–320 (GELP…RGRA). 2 disordered regions span residues 334-356 (SLQP…PLPP) and 584-622 (PAVG…PVSF). The segment covering 344 to 356 (PLLPPPVAPPLPP) has biased composition (pro residues). The span at 593–615 (PRTEEPLSGVKDRDEGLGPHHSS) shows a compositional bias: basic and acidic residues.

The chain is Coiled-coil domain-containing protein 17 (CCDC17) from Homo sapiens (Human).